A 431-amino-acid polypeptide reads, in one-letter code: UDP-N-acetylglucosamine 1-carboxyvinyltransferase (431 aa).

Residue 25–26 participates in phosphoenolpyruvate binding; it reads KN. Residue Arg-101 participates in UDP-N-acetyl-alpha-D-glucosamine binding. Cys-125 functions as the Proton donor in the catalytic mechanism. 2-(S-cysteinyl)pyruvic acid O-phosphothioketal is present on Cys-125. UDP-N-acetyl-alpha-D-glucosamine-binding residues include Asp-317 and Ile-339.

It belongs to the EPSP synthase family. MurA subfamily.

Its subcellular location is the cytoplasm. It carries out the reaction phosphoenolpyruvate + UDP-N-acetyl-alpha-D-glucosamine = UDP-N-acetyl-3-O-(1-carboxyvinyl)-alpha-D-glucosamine + phosphate. It participates in cell wall biogenesis; peptidoglycan biosynthesis. Functionally, cell wall formation. Adds enolpyruvyl to UDP-N-acetylglucosamine. The chain is UDP-N-acetylglucosamine 1-carboxyvinyltransferase from Thermobifida fusca (strain YX).